We begin with the raw amino-acid sequence, 439 residues long: ATP-dependent protease ATPase subunit HslU (439 aa).

ATP contacts are provided by residues I17, 59 to 64 (GVGKTE), D251, E317, and R389.

This sequence belongs to the ClpX chaperone family. HslU subfamily. In terms of assembly, a double ring-shaped homohexamer of HslV is capped on each side by a ring-shaped HslU homohexamer. The assembly of the HslU/HslV complex is dependent on binding of ATP.

The protein localises to the cytoplasm. Its function is as follows. ATPase subunit of a proteasome-like degradation complex; this subunit has chaperone activity. The binding of ATP and its subsequent hydrolysis by HslU are essential for unfolding of protein substrates subsequently hydrolyzed by HslV. HslU recognizes the N-terminal part of its protein substrates and unfolds these before they are guided to HslV for hydrolysis. In Campylobacter jejuni (strain RM1221), this protein is ATP-dependent protease ATPase subunit HslU.